Consider the following 311-residue polypeptide: Malate dehydrogenase (311 aa).

Gly10–Gly15 is a binding site for NAD(+). Residues Arg85 and Arg91 each coordinate substrate. NAD(+) is bound by residues Asn98 and Leu121–Asn123. Substrate-binding residues include Asn123 and Arg154. The active-site Proton acceptor is His178.

The protein belongs to the LDH/MDH superfamily. MDH type 3 family.

It carries out the reaction (S)-malate + NAD(+) = oxaloacetate + NADH + H(+). In terms of biological role, catalyzes the reversible oxidation of malate to oxaloacetate. The polypeptide is Malate dehydrogenase (Staphylococcus carnosus (strain TM300)).